The primary structure comprises 631 residues: RING finger protein 112 (631 aa).

The RING-type zinc finger occupies 57 to 98; that stretch reads CSICLERLRDPISLDCGHDFCIRCFSTHRLPGCEPPCCPECR. Residues 131–631 are interaction with ZBTB16; sequence PVRAEPLLLV…GDREPLLQEE (501 aa). The GB1/RHD3-type G domain occupies 166–397; sequence DTPVCLLAVL…YVSDVLSAAP (232 aa). Residue 318-319 participates in GTP binding; sequence RD. Transmembrane regions (helical) follow at residues 547 to 567 and 580 to 600; these read LAAV…GVVG and GMVA…GGGV.

Belongs to the TRAFAC class dynamin-like GTPase superfamily. GB1/RHD3 GTPase family. GB1 subfamily. In terms of assembly, self-associates. Interacts with SP1 in an oxidative stress-regulated manner. Interacts with SIGMAR1 in an oxidative stress-regulated manner. Interacts with ZBTB16 (via C2H2-type zinc finger domains 1 and 2). Post-translationally, auto-ubiquitinated. Predominantly expressed in brain. Decreased expression in glioma brain tumors as compared to normal brains (at protein level).

The protein resides in the membrane. The protein localises to the cytoplasm. Its subcellular location is the nucleus. It is found in the nuclear body. It localises to the nucleoplasm. The protein resides in the endosome. The protein localises to the cytoplasmic vesicle. Its subcellular location is the secretory vesicle. It is found in the synaptic vesicle. It localises to the postsynaptic density. The protein resides in the perikaryon. The protein localises to the cell projection. Its subcellular location is the neuron projection. It carries out the reaction S-ubiquitinyl-[E2 ubiquitin-conjugating enzyme]-L-cysteine + [acceptor protein]-L-lysine = [E2 ubiquitin-conjugating enzyme]-L-cysteine + N(6)-ubiquitinyl-[acceptor protein]-L-lysine.. It functions in the pathway protein modification; protein ubiquitination. Its function is as follows. E3 ubiquitin-protein ligase that plays an important role in neuronal differentiation, including neurogenesis and gliogenesis, during brain development. During embryonic development initiates neuronal differentiation by inducing cell cycle arrest at the G0/G1 phase through up-regulation of cell-cycle regulatory proteins. Plays a role not only in the fetal period during the development of the nervous system, but also in the adult brain, where it is involved in the maintenance of neural functions and protection of the nervous tissue cells from oxidative stress-induced damage. Exhibits GTPase and E3 ubiquitin-protein ligase activities. Regulates dendritic spine density and synaptic neurotransmission; its ability to hydrolyze GTP is involved in the maintenance of dendritic spine density. This Homo sapiens (Human) protein is RING finger protein 112 (RNF112).